The chain runs to 349 residues: Thylakoid lumenal 29 kDa protein, chloroplastic (349 aa).

Position 155 is a phosphoserine (Ser-155).

This sequence belongs to the peroxidase family.

The protein resides in the plastid. Its subcellular location is the chloroplast thylakoid lumen. This is Thylakoid lumenal 29 kDa protein, chloroplastic (TL29) from Arabidopsis thaliana (Mouse-ear cress).